Here is a 475-residue protein sequence, read N- to C-terminus: Ribulose bisphosphate carboxylase large chain (475 aa).

A propeptide spanning residues 1-2 (MA) is cleaved from the precursor. Residue Pro3 is modified to N-acetylproline. Lys14 is modified (N6,N6,N6-trimethyllysine). Substrate contacts are provided by Asn123 and Thr173. Residue Lys175 is the Proton acceptor of the active site. Position 177 (Lys177) interacts with substrate. The Mg(2+) site is built by Lys201, Asp203, and Glu204. At Lys201 the chain carries N6-carboxylysine. His294 (proton acceptor) is an active-site residue. The substrate site is built by Arg295, His327, and Ser379.

Belongs to the RuBisCO large chain family. Type I subfamily. In terms of assembly, heterohexadecamer of 8 large chains and 8 small chains; disulfide-linked. The disulfide link is formed within the large subunit homodimers. Mg(2+) is required as a cofactor. In terms of processing, the disulfide bond which can form in the large chain dimeric partners within the hexadecamer appears to be associated with oxidative stress and protein turnover.

Its subcellular location is the plastid. It is found in the chloroplast. It carries out the reaction 2 (2R)-3-phosphoglycerate + 2 H(+) = D-ribulose 1,5-bisphosphate + CO2 + H2O. The catalysed reaction is D-ribulose 1,5-bisphosphate + O2 = 2-phosphoglycolate + (2R)-3-phosphoglycerate + 2 H(+). Functionally, ruBisCO catalyzes two reactions: the carboxylation of D-ribulose 1,5-bisphosphate, the primary event in carbon dioxide fixation, as well as the oxidative fragmentation of the pentose substrate in the photorespiration process. Both reactions occur simultaneously and in competition at the same active site. This is Ribulose bisphosphate carboxylase large chain from Bryopsis maxima (Green alga).